Here is a 183-residue protein sequence, read N- to C-terminus: Cell division protein SepF (183 aa).

The segment at 13–58 (MHDDDDFDDDYEDYDDDFDEDYEDDKPSARKRLFTGSSKKDSVADE) is disordered. Positions 16-36 (DDDFDDDYEDYDDDFDEDYED) are enriched in acidic residues.

It belongs to the SepF family. Homodimer. Interacts with FtsZ.

It localises to the cytoplasm. Its function is as follows. Cell division protein that is part of the divisome complex and is recruited early to the Z-ring. Probably stimulates Z-ring formation, perhaps through the cross-linking of FtsZ protofilaments. Its function overlaps with FtsA. The sequence is that of Cell division protein SepF from Lachnospira eligens (strain ATCC 27750 / DSM 3376 / VPI C15-48 / C15-B4) (Eubacterium eligens).